Reading from the N-terminus, the 98-residue chain is Co-chaperonin GroES (98 aa).

This sequence belongs to the GroES chaperonin family. Heptamer of 7 subunits arranged in a ring. Interacts with the chaperonin GroEL.

The protein resides in the cytoplasm. Its function is as follows. Together with the chaperonin GroEL, plays an essential role in assisting protein folding. The GroEL-GroES system forms a nano-cage that allows encapsulation of the non-native substrate proteins and provides a physical environment optimized to promote and accelerate protein folding. GroES binds to the apical surface of the GroEL ring, thereby capping the opening of the GroEL channel. This Brucella abortus (strain S19) protein is Co-chaperonin GroES.